Here is a 203-residue protein sequence, read N- to C-terminus: Glycerol-3-phosphate acyltransferase (203 aa).

The next 6 membrane-spanning stretches (helical) occupy residues 3–23, 51–71, 74–94, 116–136, 140–160, and 164–178; these read ILLA…VVVS, KAAI…VWLV, FGIG…LGHL, AVHP…AFFF, SLAA…LFGT, and PVAW…LLIW.

It belongs to the PlsY family. In terms of assembly, probably interacts with PlsX.

Its subcellular location is the cell inner membrane. The enzyme catalyses an acyl phosphate + sn-glycerol 3-phosphate = a 1-acyl-sn-glycero-3-phosphate + phosphate. Its pathway is lipid metabolism; phospholipid metabolism. Functionally, catalyzes the transfer of an acyl group from acyl-phosphate (acyl-PO(4)) to glycerol-3-phosphate (G3P) to form lysophosphatidic acid (LPA). This enzyme utilizes acyl-phosphate as fatty acyl donor, but not acyl-CoA or acyl-ACP. In Burkholderia mallei (strain ATCC 23344), this protein is Glycerol-3-phosphate acyltransferase.